The chain runs to 856 residues: Villin-like protein (856 aa).

Gelsolin-like repeat units lie at residues 22–74, 146–186, 263–307, 401–450, 521–561, and 624–665; these read RKMV…EAQG, VSAT…SEKA, LVVL…QERK, LHRQ…DEIE, TRTM…DQRE, and LVLA…WKEA. Positions 762–796 are disordered; the sequence is SQDSSENDLVRSPKSAGSRTSSSVSSTSATINGGL. Residues 776–791 are compositionally biased toward low complexity; that stretch reads SAGSRTSSSVSSTSAT. An HP domain is found at 790 to 856; that stretch reads ATINGGLRRE…RQEKKQLGFF (67 aa).

Belongs to the villin/gelsolin family. Ubiquitously expressed in 16 tissues examined.

Possible tumor suppressor. The chain is Villin-like protein (VILL) from Homo sapiens (Human).